The chain runs to 328 residues: Alanine racemase (328 aa).

The active-site Proton acceptor; specific for D-alanine is Lys-33. An N6-(pyridoxal phosphate)lysine modification is found at Lys-33. A substrate-binding site is contributed by Arg-118. Tyr-237 acts as the Proton acceptor; specific for L-alanine in catalysis. Met-283 is a binding site for substrate.

The protein belongs to the alanine racemase family. It depends on pyridoxal 5'-phosphate as a cofactor.

It carries out the reaction L-alanine = D-alanine. The protein operates within amino-acid biosynthesis; D-alanine biosynthesis; D-alanine from L-alanine: step 1/1. In terms of biological role, catalyzes the interconversion of L-alanine and D-alanine. May also act on other amino acids. In Campylobacter jejuni (strain RM1221), this protein is Alanine racemase (alr).